Consider the following 278-residue polypeptide: 4-deoxy-L-threo-5-hexosulose-uronate ketol-isomerase (278 aa).

Positions 196, 198, 203, and 245 each coordinate Zn(2+).

The protein belongs to the KduI family. Zn(2+) serves as cofactor.

The catalysed reaction is 5-dehydro-4-deoxy-D-glucuronate = 3-deoxy-D-glycero-2,5-hexodiulosonate. It participates in glycan metabolism; pectin degradation; 2-dehydro-3-deoxy-D-gluconate from pectin: step 4/5. Catalyzes the isomerization of 5-dehydro-4-deoxy-D-glucuronate to 3-deoxy-D-glycero-2,5-hexodiulosonate. This chain is 4-deoxy-L-threo-5-hexosulose-uronate ketol-isomerase, found in Paraburkholderia phytofirmans (strain DSM 17436 / LMG 22146 / PsJN) (Burkholderia phytofirmans).